We begin with the raw amino-acid sequence, 68 residues long: Large ribosomal subunit protein uL29 (68 aa).

Belongs to the universal ribosomal protein uL29 family.

This is Large ribosomal subunit protein uL29 from Streptococcus agalactiae serotype Ia (strain ATCC 27591 / A909 / CDC SS700).